A 348-amino-acid polypeptide reads, in one-letter code: Lipoyl synthase (348 aa).

The segment at 1–45 (MSESAKPRITSGSKFRNEHGFSAIKDGVKRSSSNTEGKSLERKPK) is disordered. C73, C78, C84, C99, C103, C106, and S314 together coordinate [4Fe-4S] cluster. A Radical SAM core domain is found at 85–303 (WTNGTATIMV…RDIGLEKGFM (219 aa)).

This sequence belongs to the radical SAM superfamily. Lipoyl synthase family. [4Fe-4S] cluster serves as cofactor.

The protein resides in the cytoplasm. It carries out the reaction [[Fe-S] cluster scaffold protein carrying a second [4Fe-4S](2+) cluster] + N(6)-octanoyl-L-lysyl-[protein] + 2 oxidized [2Fe-2S]-[ferredoxin] + 2 S-adenosyl-L-methionine + 4 H(+) = [[Fe-S] cluster scaffold protein] + N(6)-[(R)-dihydrolipoyl]-L-lysyl-[protein] + 4 Fe(3+) + 2 hydrogen sulfide + 2 5'-deoxyadenosine + 2 L-methionine + 2 reduced [2Fe-2S]-[ferredoxin]. It participates in protein modification; protein lipoylation via endogenous pathway; protein N(6)-(lipoyl)lysine from octanoyl-[acyl-carrier-protein]: step 2/2. In terms of biological role, catalyzes the radical-mediated insertion of two sulfur atoms into the C-6 and C-8 positions of the octanoyl moiety bound to the lipoyl domains of lipoate-dependent enzymes, thereby converting the octanoylated domains into lipoylated derivatives. This is Lipoyl synthase from Marinobacter nauticus (strain ATCC 700491 / DSM 11845 / VT8) (Marinobacter aquaeolei).